The following is a 726-amino-acid chain: Catalase-peroxidase (726 aa).

Residues Trp-91 to Tyr-214 constitute a cross-link (tryptophyl-tyrosyl-methioninium (Trp-Tyr) (with M-240)). Residue His-92 is the Proton acceptor of the active site. The segment at residues Tyr-214 to Met-240 is a cross-link (tryptophyl-tyrosyl-methioninium (Tyr-Met) (with W-91)). His-255 lines the heme b pocket. Residues Ala-335–Ser-362 are disordered.

It belongs to the peroxidase family. Peroxidase/catalase subfamily. In terms of assembly, homodimer or homotetramer. Requires heme b as cofactor. Post-translationally, formation of the three residue Trp-Tyr-Met cross-link is important for the catalase, but not the peroxidase activity of the enzyme.

It carries out the reaction H2O2 + AH2 = A + 2 H2O. It catalyses the reaction 2 H2O2 = O2 + 2 H2O. Bifunctional enzyme with both catalase and broad-spectrum peroxidase activity. The chain is Catalase-peroxidase from Cupriavidus metallidurans (strain ATCC 43123 / DSM 2839 / NBRC 102507 / CH34) (Ralstonia metallidurans).